We begin with the raw amino-acid sequence, 249 residues long: Segregation and condensation protein A (249 aa).

The protein belongs to the ScpA family. As to quaternary structure, component of a cohesin-like complex composed of ScpA, ScpB and the Smc homodimer, in which ScpA and ScpB bind to the head domain of Smc. The presence of the three proteins is required for the association of the complex with DNA.

It is found in the cytoplasm. In terms of biological role, participates in chromosomal partition during cell division. May act via the formation of a condensin-like complex containing Smc and ScpB that pull DNA away from mid-cell into both cell halves. This chain is Segregation and condensation protein A, found in Listeria monocytogenes serotype 4b (strain CLIP80459).